The chain runs to 144 residues: Cytochrome c oxidase subunit 4 isoform 1, mitochondrial (144 aa).

The Mitochondrial matrix portion of the chain corresponds to 1–73 (SVVKSEDYAL…SFAEMNRGSN (73 aa)). Lys4 bears the N6-acetyllysine; alternate mark. Residue Lys4 is modified to N6-succinyllysine; alternate. Phosphoserine is present on residues Ser31 and Ser33. Lys35 carries the post-translational modification N6-acetyllysine; alternate. Lys35 is modified (N6-succinyllysine; alternate). At Lys42 the chain carries N6-acetyllysine. A helical transmembrane segment spans residues 74 to 99 (EWKTVVGAAMFFIGFTAILIILEKRY). Topologically, residues 100 to 144 (VYGPLPHTFDKEWVAMQTKRMLDLKVNPVDGLASKWDYDKKEWKK) are mitochondrial intermembrane.

The protein belongs to the cytochrome c oxidase IV family. Component of the cytochrome c oxidase (complex IV, CIV), a multisubunit enzyme composed of 14 subunits. The complex is composed of a catalytic core of 3 subunits MT-CO1, MT-CO2 and MT-CO3, encoded in the mitochondrial DNA, and 11 supernumerary subunits COX4I, COX5A, COX5B, COX6A, COX6B, COX6C, COX7A, COX7B, COX7C, COX8 and NDUFA4, which are encoded in the nuclear genome. The complex exists as a monomer or a dimer and forms supercomplexes (SCs) in the inner mitochondrial membrane with NADH-ubiquinone oxidoreductase (complex I, CI) and ubiquinol-cytochrome c oxidoreductase (cytochrome b-c1 complex, complex III, CIII), resulting in different assemblies (supercomplex SCI(1)III(2)IV(1) and megacomplex MCI(2)III(2)IV(2)). Interacts with PHB2; the interaction decreases in absence of SPHK2. Interacts with AFG1L. Interacts with ABCB7; this interaction allows the regulation of cellular iron homeostasis and cellular reactive oxygen species (ROS) levels in cardiomyocytes. Interacts with FLVCR2; this interaction occurs in the absence of heme and is disrupted upon heme binding. Interacts with IRGC.

The protein resides in the mitochondrion inner membrane. It participates in energy metabolism; oxidative phosphorylation. In terms of biological role, component of the cytochrome c oxidase, the last enzyme in the mitochondrial electron transport chain which drives oxidative phosphorylation. The respiratory chain contains 3 multisubunit complexes succinate dehydrogenase (complex II, CII), ubiquinol-cytochrome c oxidoreductase (cytochrome b-c1 complex, complex III, CIII) and cytochrome c oxidase (complex IV, CIV), that cooperate to transfer electrons derived from NADH and succinate to molecular oxygen, creating an electrochemical gradient over the inner membrane that drives transmembrane transport and the ATP synthase. Cytochrome c oxidase is the component of the respiratory chain that catalyzes the reduction of oxygen to water. Electrons originating from reduced cytochrome c in the intermembrane space (IMS) are transferred via the dinuclear copper A center (CU(A)) of subunit 2 and heme A of subunit 1 to the active site in subunit 1, a binuclear center (BNC) formed by heme A3 and copper B (CU(B)). The BNC reduces molecular oxygen to 2 water molecules using 4 electrons from cytochrome c in the IMS and 4 protons from the mitochondrial matrix. This is Cytochrome c oxidase subunit 4 isoform 1, mitochondrial (COX4I1) from Aotus azarae (Azara's night monkey).